A 378-amino-acid chain; its full sequence is Nitronate monooxygenase (378 aa).

The propeptide occupies 1 to 15 (MHFPGHSSKKEESAQ). 37–39 (PMY) is an FMN binding site. Catalysis depends on His-196, which acts as the Proton acceptor. His-196 is a substrate binding site. FMN contacts are provided by residues 229–231 (AGG) and 252–253 (GT).

It belongs to the nitronate monooxygenase family. NMO class II subfamily. As to quaternary structure, homodimer. It depends on FMN as a cofactor.

The catalysed reaction is ethylnitronate + O2 = chemical entity + acetaldehyde + nitrite + H(+). Its function is as follows. Catalyzes the oxidation of alkyl nitronates to produce the corresponding carbonyl compounds and nitrites. Anionic forms of nitroalkanes are much better substrates than are neutral forms. The chain is Nitronate monooxygenase (ncd-2) from Neurospora crassa (strain ATCC 24698 / 74-OR23-1A / CBS 708.71 / DSM 1257 / FGSC 987).